The chain runs to 1115 residues: DNA-directed RNA polymerase subunit beta (1115 aa).

Positions 1084-1115 are disordered; the sequence is HEAGEGEDDEYFEEDEEAVDDEPMTFDDDDME. Over residues 1088–1115 the composition is skewed to acidic residues; sequence EGEDDEYFEEDEEAVDDEPMTFDDDDME.

It belongs to the RNA polymerase beta chain family. In terms of assembly, the RNAP catalytic core consists of 2 alpha, 1 beta, 1 beta' and 1 omega subunit. When a sigma factor is associated with the core the holoenzyme is formed, which can initiate transcription.

It catalyses the reaction RNA(n) + a ribonucleoside 5'-triphosphate = RNA(n+1) + diphosphate. Its function is as follows. DNA-dependent RNA polymerase catalyzes the transcription of DNA into RNA using the four ribonucleoside triphosphates as substrates. The sequence is that of DNA-directed RNA polymerase subunit beta from Desulfitobacterium hafniense (strain Y51).